A 166-amino-acid chain; its full sequence is MAQRLLLRRFLTSIISGKPSQSRWAPVASRALQTPQYSPGYLTVTPSQARSIYTTRVCSTTFNIQDGPDFQDRVVNSETPVVVDFHAQWCGPCKILGPRLEKVVAKQHGKVVMAKVDIDDHTDLALEYEVSAVPTVLAMKNGDVVDKFVGIKDEDQLEAFLKKLIG.

The N-terminal 59 residues, 1 to 59 (MAQRLLLRRFLTSIISGKPSQSRWAPVASRALQTPQYSPGYLTVTPSQARSIYTTRVCS), are a transit peptide targeting the mitochondrion. A Thioredoxin domain is found at 61–166 (TFNIQDGPDF…LEAFLKKLIG (106 aa)). Active-site nucleophile residues include C90 and C93. C90 and C93 are oxidised to a cystine. K152 carries the post-translational modification N6-acetyllysine; alternate. Position 152 is an N6-succinyllysine; alternate (K152).

This sequence belongs to the thioredoxin family. Monomer.

It localises to the mitochondrion. Its function is as follows. Important for the control of mitochondrial reactive oxygen species homeostasis, apoptosis regulation and cell viability. Is involved in various redox reactions including the reduction of protein disulfide bonds, through the reversible oxidation of its active center dithiol to a disulfide. This Bos taurus (Bovine) protein is Thioredoxin, mitochondrial (TXN2).